The following is a 1209-amino-acid chain: Protein FAM83H (1209 aa).

Positions 1–286 are DUF1669; sequence MARRSQSSSQ…LFAQSEPLVP (286 aa). The mediates interaction with CSNK1A1 and is required for FAM83H activity in keratin cytoskeleton organization stretch occupies residues 1-286; it reads MARRSQSSSQ…LFAQSEPLVP (286 aa). Phosphoserine occurs at positions 512, 513, 515, 522, 639, and 660. 3 disordered regions span residues 512–545, 615–664, and 735–760; these read SSAS…NLGQ, RDLL…FRSR, and KGPA…VVSQ. T749 carries the phosphothreonine modification. Phosphoserine occurs at positions 752, 778, 806, and 871. The tract at residues 829–1056 is disordered; the sequence is AQGRSLSPQG…EERGSRVRLA (228 aa). Position 873 is a phosphothreonine (T873). Phosphoserine occurs at positions 882, 893, 904, and 915. Residues 915 to 942 show a composition bias toward polar residues; that stretch reads SPTSGFPNRRGSPTTGLMEQKGSPTSTY. The residue at position 917 (T917) is a Phosphothreonine. S926 bears the Phosphoserine mark. At T928 the chain carries Phosphothreonine. Residues S937, S948, S959, S970, S977, S1035, S1041, and S1057 each carry the phosphoserine modification. T1072 carries the phosphothreonine modification. Disordered stretches follow at residues 1076-1147 and 1174-1193; these read LEQI…EERD and EAGS…RDSK. A phosphoserine mark is found at S1080, S1098, and S1177.

This sequence belongs to the FAM83 family. Directly interacts (via DUF1669) with casein kinase isoforms CSNK1A1, CSNK1A1L, CSNK1D and CSNK1E. Interaction with CSNK1A1 recruits CSNK1A1 to keratin filaments. Interacts with KRT18 and probably other keratins. Expressed in tooth follicle, eye, liver and kidney.

It localises to the cytoplasm. Its subcellular location is the cytoskeleton. May play a major role in the structural organization and calcification of developing enamel. May play a role in keratin cytoskeleton disassembly by recruiting CSNK1A1 to keratin filaments. Thereby, it may regulate epithelial cell migration. The sequence is that of Protein FAM83H from Mus musculus (Mouse).